Consider the following 1506-residue polypeptide: MAKQGSKEKKGYPELKEVIKATCKIRVGPGKETLTEGNCLWALKTIDFIFEDLKTEPWTITKMYTVWDRLKGLTPEETSKREFASLQATLACIMCSQMGMKPETVQAAKGIISMKEGLHENKEAKGEKVEQLYPNLEKHREVYPIVNLQAGGRSWKAVESVVFQQLQTVAMQHGLVSEDFERQLAYYATTWTSKDILEVLAMMPGNRAQKELIQGKLNEEAERWVRQNPPGPNVLTVDQIMGVGQTNQQASQANMDQARQICLQWVITALRSVRHMSHRPGNPMLVKQKNTESYEDFIARLLEAIDAEPVTDPIKTYLKVTLSYTNASTDCQKQMDRTLGTRVQQATVEEKMQACRDVGSEGFKMQLLAQALRPQGKAGHKGVNQKCYNCGKPGHLARQCRQGIICHHCGKRGHMQKDCRQKKQQGKQQEGATCGAVRAPYVVTEAPPKIEIKVGTRWKKLLVDTGADKTIVTSHDMSGIPKGRIILQGIGGIIEGEKWEQVHLQYKDKMIKGTIVVLATSPVEVLGRDNMRELGIGLIMANLEEKKIPSTRVRLKEGCKGPHIAQWPLTQEKLEGLKEIVDRLEKEGKVGRAPPHWTCNTPIFCIKKKSGKWRMLIDFRELNKQTEDLAEAQLGLPHPGGLQRKKHVTILDIGDAYFTIPLYEPYRQYTCFTMLSPNNLGPCVRYYWKVLPQGWKLSPAVYQFTMQKILRGWIEEHPMIQFGIYMDDIYIGSDLGLEEHRGIVNELASYIAQYGFMLPEDKRQEGYPAKWLGFELHPEKWKFQKHTLPEITEGPITLNKLQKLVGDLVWRQSLIGKSIPNILKLMEGDRALQSERYIESIHVREWEACRQKLKEMEGNYYDEEKDIYGQLDWGNKAIEYIVFQEKGKPLWVNVVHSIKNLSQAQQIIKAAQKLTQEVIIRTGKIPWILLPGREEDWILELQMGNINWMPSFWSCYKGSVRWKKRNVIAELVPGPTYYTDGGKKNGRGSLGYIASTGEKFRIHEEGTNQQLELRAIEEACKQGPEKMNIVTDSRYAYEFMLRNWDEEVIRNPIQARIMELVHNKEKIGVHWVPGHKGIPQNEEIDRYISEIFLAKEGRGILQKRAEDAGYDLICPQEISIPAGQVKRIAIDLKINLKKDQWAMIGTKSSFANKGVFVQGGIIDSGYQGTIQVVIYNSNNKEVVIPQGRKFAQLILMPLIHEELEPWGETRKTERGEQGFGSTGMYWIENIPLAEEEHNKWHQDAVSLHLEFGIPRTAAEDIVQQCDVCQENKMPSTLRGSNKRGIDHWQVDYTHYEDKIILVWVETNSGLIYAERVKGETGQEFRVQTMKWYAMFAPKSLQSDNGPAFVAESTQLLMKYLGIEHTTGIPWNPQSQALVERTHQTLKNTLEKLIPMFNAFESALAGTLITLNIKRKGGLGTSPMDIFIFNKEQQRIQQQSKSKQEKIRFCYYRTRKRGHPGEWQGPTQVLWGGDGAIVVKDRGTDRYLVIANKDVKFIPPPKEIQKE.

2 CCHC-type zinc fingers span residues 385 to 402 and 404 to 421; these read QKCY…QCRQ and IICH…DCRQ. The Peptidase A2 domain occupies 459 to 530; it reads KKLLVDTGAD…SPVEVLGRDN (72 aa). Catalysis depends on Asp464, which acts as the Protease; shared with dimeric partner. In terms of domain architecture, Reverse transcriptase spans 587-776; the sequence is EGKVGRAPPH…YPAKWLGFEL (190 aa). Mg(2+) contacts are provided by Asp652, Asp727, Asp728, Asp980, Glu1012, Asp1032, and Asp1085. Residues 971-1093 form the RNase H type-1 domain; it reads LVPGPTYYTD…IDRYISEIFL (123 aa). An Integrase-type zinc finger spans residues 1228–1269; that stretch reads ENIPLAEEEHNKWHQDAVSLHLEFGIPRTAAEDIVQQCDVCQ. Zn(2+) is bound by residues His1237, His1241, Cys1265, and Cys1268. Residues 1270 to 1430 enclose the Integrase catalytic domain; that stretch reads ENKMPSTLRG…SPMDIFIFNK (161 aa). 3 residues coordinate Mg(2+): Asp1291, Asp1343, and Glu1379. Residues 1447-1499 constitute a DNA-binding region (integrase-type); sequence RFCYYRTRKRGHPGEWQGPTQVLWGGDGAIVVKDRGTDRYLVIANKDVKFIPP.

This sequence belongs to the retroviral Pol polyprotein family. Homotetramer; further associates as a homohexadecamer. Mg(2+) is required as a cofactor. Post-translationally, specific enzymatic cleavages by the viral protease yield mature proteins.

The protein resides in the virion. It catalyses the reaction Endonucleolytic cleavage to 5'-phosphomonoester.. It carries out the reaction 3'-end directed exonucleolytic cleavage of viral RNA-DNA hybrid.. The catalysed reaction is dUTP + H2O = dUMP + diphosphate + H(+). The enzyme catalyses DNA(n) + a 2'-deoxyribonucleoside 5'-triphosphate = DNA(n+1) + diphosphate. Functionally, mediates, with Gag polyprotein, the essential events in virion assembly, including binding the plasma membrane, making the protein-protein interactions necessary to create spherical particles, recruiting the viral Env proteins, and packaging the genomic RNA via direct interactions with the RNA packaging sequence. Its function is as follows. Targets the polyprotein to the plasma membrane. In terms of biological role, forms the core that encapsulates the genomic RNA-nucleocapsid complex in the virion. Encapsulates and protects viral dimeric unspliced genomic RNA (gRNA). Binds these RNAs through its zinc fingers. Acts as a nucleic acid chaperone which is involved in rearrangement of nucleic acid secondary structure during gRNA retrotranscription. Also facilitates template switch leading to recombination. Functionally, the aspartyl protease mediates proteolytic cleavages of Gag and Gag-Pol polyproteins during or shortly after the release of the virion from the plasma membrane. Cleavages take place as an ordered, step-wise cascade to yield mature proteins. This process is called maturation. Displays maximal activity during the budding process just prior to particle release from the cell. Its function is as follows. RT is a multifunctional enzyme that converts the viral dimeric RNA genome into dsDNA in the cytoplasm, shortly after virus entry into the cell. This enzyme displays a DNA polymerase activity that can copy either DNA or RNA templates, and a ribonuclease H (RNase H) activity that cleaves the RNA strand of RNA-DNA heteroduplexes in a partially processive 3' to 5' endonucleasic mode. Conversion of viral genomic RNA into dsDNA requires many steps. A tRNA-Trp binds to the primer-binding site (PBS) situated at the 5' end of the viral RNA. RT uses the 3' end of the tRNA primer to perfom a short round of RNA-dependent minus-strand DNA synthesis. The reading proceeds through the U5 region and ends after the repeated (R) region which is present at both ends of viral RNA. The portion of the RNA-DNA heteroduplex is digested by the RNase H, resulting in a ssDNA product attached to the tRNA primer. This ssDNA/tRNA hybridizes with the identical R region situated at the 3' end of viral RNA. This template exchange, known as minus-strand DNA strong stop transfer, can be either intra- or intermolecular. RT uses the 3' end of this newly synthesized short ssDNA to perfom the RNA-dependent minus-strand DNA synthesis of the whole template. RNase H digests the RNA template except for a polypurine tract (PPT) situated at the 5' end of the genome. It is not clear if both polymerase and RNase H activities are simultaneous. RNase H probably can proceed both in a polymerase-dependent (RNA cut into small fragments by the same RT performing DNA synthesis) and a polymerase-independent mode (cleavage of remaining RNA fragments by free RTs). Secondly, RT performs DNA-directed plus-strand DNA synthesis using the PPT that has not been removed by RNase H as primers. PPT and tRNA primers are then removed by RNase H. The 3' and 5' ssDNA PBS regions hybridize to form a circular dsDNA intermediate. Strand displacement synthesis by RT to the PBS and PPT ends produces a blunt ended, linear dsDNA copy of the viral genome that includes long terminal repeats (LTRs) at both ends. In terms of biological role, catalyzes viral DNA integration into the host chromosome, by performing a series of DNA cutting and joining reactions. This Ovis aries (Sheep) protein is Gag-Pol polyprotein (pol).